Here is a 199-residue protein sequence, read N- to C-terminus: Large ribosomal subunit protein mL51 (199 aa).

The transit peptide at 1–15 directs the protein to the mitochondrion; sequence MNSASISRLTSVIRT.

It belongs to the mitochondrion-specific ribosomal protein mL51 family. As to quaternary structure, component of the mitochondrial ribosome large subunit (39S) which comprises a 16S rRNA and about 50 distinct proteins.

The protein localises to the mitochondrion. This chain is Large ribosomal subunit protein mL51 (mrpl-51), found in Caenorhabditis briggsae.